The primary structure comprises 106 residues: MMTLVPRARTRAGQDHYSHPCPRFSQVLLTEGIMTYCLTKNLSDVNILHRLLKNGNVRNTLLQSKVGLLTYYVKLYPGEVTLLTRPSIQMRLCCITGSVSRPRSQK.

This sequence belongs to the VCX/VCY family. In terms of assembly, interacts with MAP1S. Interacts with UBE3A (via HECT domain). In terms of tissue distribution, expressed exclusively in testis. Expressed in ejaculated spermatozoa of germ cell. Expressed in the nuclei of spermatogonia, spermatocytes, and round spermatids, except elongated spermatids (at protein level).

In Homo sapiens (Human), this protein is Testis-specific basic protein Y 2 (BPY2).